The chain runs to 290 residues: 4-hydroxybenzoate octaprenyltransferase (290 aa).

9 helical membrane-spanning segments follow: residues 23–43 (IGTE…SDGY), 46–66 (LKMF…GCAI), 96–116 (AIWV…FLPI), 118–138 (TFYW…MKRY), 141–161 (LPQV…YTAT), 169–189 (CWLL…QYAI), 212–232 (IPII…ALYI), 235–255 (LLFP…IYQW), and 265–285 (LCFW…LAIL).

Belongs to the UbiA prenyltransferase family. Mg(2+) is required as a cofactor.

The protein localises to the cell inner membrane. It catalyses the reaction all-trans-octaprenyl diphosphate + 4-hydroxybenzoate = 4-hydroxy-3-(all-trans-octaprenyl)benzoate + diphosphate. Its pathway is cofactor biosynthesis; ubiquinone biosynthesis. Functionally, catalyzes the prenylation of para-hydroxybenzoate (PHB) with an all-trans polyprenyl group. Mediates the second step in the final reaction sequence of ubiquinone-8 (UQ-8) biosynthesis, which is the condensation of the polyisoprenoid side chain with PHB, generating the first membrane-bound Q intermediate 3-octaprenyl-4-hydroxybenzoate. The protein is 4-hydroxybenzoate octaprenyltransferase of Acinetobacter baylyi (strain ATCC 33305 / BD413 / ADP1).